The chain runs to 335 residues: uncharacterized protein (335 aa).

The next 4 membrane-spanning stretches (helical) occupy residues 104–124, 128–148, 280–300, and 310–330; these read FKKV…MGLL, LLQG…LSLF, LAFG…TMIG, and TINL…GIFV.

It localises to the cell membrane. This is an uncharacterized protein from Methanocaldococcus jannaschii (strain ATCC 43067 / DSM 2661 / JAL-1 / JCM 10045 / NBRC 100440) (Methanococcus jannaschii).